A 130-amino-acid polypeptide reads, in one-letter code: Small ribosomal subunit protein uS9 (130 aa).

It belongs to the universal ribosomal protein uS9 family.

This chain is Small ribosomal subunit protein uS9, found in Vibrio cholerae serotype O1 (strain ATCC 39541 / Classical Ogawa 395 / O395).